Consider the following 491-residue polypeptide: NADH-quinone oxidoreductase subunit N 1 (491 aa).

Transmembrane regions (helical) follow at residues 9 to 29 (IAAP…LDLL), 38 to 58 (PMYV…VPLW), 76 to 96 (FAAV…LLSF), 104 to 124 (SGYL…GGAG), 126 to 146 (LMVI…MIAF), 161 to 181 (FVLG…IYGA), 211 to 231 (VGVG…PFHI), 246 to 266 (AFMA…LLVA), 276 to 296 (FLLP…TVGI), 304 to 324 (LMAY…PGLG), 329 to 349 (SAAA…FAVV), 375 to 395 (VGVC…TGGF), 410 to 432 (AWIV…LKVI), and 461 to 481 (VVLA…GPVS).

This sequence belongs to the complex I subunit 2 family. In terms of assembly, NDH-1 is composed of 14 different subunits. Subunits NuoA, H, J, K, L, M, N constitute the membrane sector of the complex.

The protein localises to the cell membrane. The catalysed reaction is a quinone + NADH + 5 H(+)(in) = a quinol + NAD(+) + 4 H(+)(out). In terms of biological role, NDH-1 shuttles electrons from NADH, via FMN and iron-sulfur (Fe-S) centers, to quinones in the respiratory chain. The immediate electron acceptor for the enzyme in this species is believed to be a menaquinone. Couples the redox reaction to proton translocation (for every two electrons transferred, four hydrogen ions are translocated across the cytoplasmic membrane), and thus conserves the redox energy in a proton gradient. The protein is NADH-quinone oxidoreductase subunit N 1 of Symbiobacterium thermophilum (strain DSM 24528 / JCM 14929 / IAM 14863 / T).